Reading from the N-terminus, the 348-residue chain is Protein RecA (348 aa).

64-71 (GPESSGKT) is an ATP binding site. Residues 325–335 (YEIDGSSKEPL) show a composition bias toward basic and acidic residues. The interval 325-348 (YEIDGSSKEPLDEKEETLSLLDDE) is disordered.

It belongs to the RecA family.

The protein localises to the cytoplasm. Its function is as follows. Can catalyze the hydrolysis of ATP in the presence of single-stranded DNA, the ATP-dependent uptake of single-stranded DNA by duplex DNA, and the ATP-dependent hybridization of homologous single-stranded DNAs. It interacts with LexA causing its activation and leading to its autocatalytic cleavage. In Listeria monocytogenes serotype 1/2a (strain 10403S), this protein is Protein RecA.